We begin with the raw amino-acid sequence, 608 residues long: MQWLSVCSLLVLLSVLSRSQAQNQICTIFTEAKEDGFKSLILVGLAQNLPDSTLGDLVPLIAEALAMGVKCCSDTPPEDCERDVADLFQSAVCSSETLVEKNDLKMCCEKTAAERTHCFVDHKAKIPRDLSLKAELPAADQCEDFKKDHKAFVGRFIFKFSKSNPMLPPHVVLAIAKGYGEVLTTCCGEAEAQTCFDTKKATFQHAVMKRVAELRSLCIVHKKYGDRVVKAKKLVQYSQKMPQASFQEMGGMVDKIVATVAPCCSGDMVTCMKERKTLVDEVCADESVLSRAAGLSACCKEDAVHRGSCVEAMKPDPKPDGLSEHYDIHADIAAVCQTFTKTPDVAMGKLVYEISVRHPESSQQVILRFAKEAEQALLQCCDMEDHAECVKTALAGSDIDKKITDETDYYKKMCAAEAAVSDDSFEKSMMVYYTRIMPQASFDQLHMVSETVHDVLHACCKDEQGHFVLPCAEEKLTDAIDATCDDYDPSSINPHIAHCCNQSYSMRRHCILAIQPDTEFTPPELDASSFHMGPELCTKDSKDLLLSGKKLLYGVVRHKTTITEDHLKTISTKYHTMKEKCCAAEDQAACFTEEAPKLVSESAELVKV.

Positions 1–14 are cleaved as a signal peptide; sequence MQWLSVCSLLVLLS. Residues 15-18 constitute a propeptide that is removed on maturation; it reads VLSR. 3 Albumin domains span residues 19–205, 206–398, and 402–600; these read SQAQ…TFQH, AVMK…AGSD, and KITD…KLVS. 18 disulfide bridges follow: Cys-26-Cys-72, Cys-71-Cys-80, Cys-93-Cys-108, Cys-107-Cys-118, Cys-142-Cys-187, Cys-186-Cys-195, Cys-218-Cys-264, Cys-263-Cys-271, Cys-283-Cys-299, Cys-298-Cys-309, Cys-336-Cys-381, Cys-380-Cys-389, Cys-414-Cys-460, Cys-459-Cys-471, Cys-484-Cys-500, Cys-499-Cys-510, Cys-537-Cys-582, and Cys-581-Cys-590. Asn-501 carries an N-linked (GlcNAc...) asparagine glycan.

It belongs to the ALB/AFP/VDB family. In terms of tissue distribution, plasma.

The protein localises to the secreted. Binds water, Ca(2+), Na(+), K(+), fatty acids, hormones, bilirubin and drugs. Its main function is the regulation of the colloidal osmotic pressure of blood. This Salmo salar (Atlantic salmon) protein is Albumin 1 (alb1).